A 470-amino-acid chain; its full sequence is MNPNQKIITIGSISLGLVVFNVLLHVVSIIVTVLVLGRGGNNGICNETVVREYNETVRIEKVTQWHNTSVVEYVPYWNEGTYMNNTEAICDVKGFAPFSKDNGIRIGSRGHVFVIREPFVSCSPTECRTFFLTQGSLLNDKHSNGTVKDRSPFRTLMSVEVGQSPNVYQARFEAVAWSATACHDGKKWMTVGVTGPDSKAVAVVHYGGVPTDVVNSWAGDILRTQESSCTCIQGDCYWVMTDGPANRQAQYRIYKANQGKIVGQTDVSFNGGHIEECSCYPNDGKVECVCRDNWTGTNRPVLVISPDLSYRVGYLCAGLPSDTPRGEDAQFTGSCTSPMGNQGYGVKGFGFRQGTDVWMGRTISRTSRSGFEILRVRNGWTQTSKEQVRKQVVVDNLNWSGYSGSFTLPVELSGKDCLVPCFWVEMIRGKPEEKTIWTSSSSIVMCGVDYEVADWSWHDGAILPFDIDKM.

The Intravirion portion of the chain corresponds to 1–14; that stretch reads MNPNQKIITIGSIS. The segment at 11 to 32 is involved in apical transport and lipid raft association; the sequence is GSISLGLVVFNVLLHVVSIIVT. A helical membrane pass occupies residues 15-35; it reads LGLVVFNVLLHVVSIIVTVLV. Positions 32-86 are hypervariable stalk region; sequence TVLVLGRGGNNGICNETVVREYNETVRIEKVTQWHNTSVVEYVPYWNEGTYMNNT. The Virion surface segment spans residues 36-470; that stretch reads LGRGGNNGIC…AILPFDIDKM (435 aa). N-linked (GlcNAc...) asparagine; by host glycans are attached at residues asparagine 46, asparagine 54, asparagine 67, and asparagine 84. The segment at 89–470 is head of neuraminidase; it reads ICDVKGFAPF…AILPFDIDKM (382 aa). 8 disulfide bridges follow: cysteine 90–cysteine 417, cysteine 122–cysteine 127, cysteine 182–cysteine 229, cysteine 231–cysteine 236, cysteine 277–cysteine 290, cysteine 279–cysteine 288, cysteine 316–cysteine 335, and cysteine 421–cysteine 446. Arginine 116 contributes to the substrate binding site. A glycan (N-linked (GlcNAc...) asparagine; by host) is linked at asparagine 144. Residue aspartate 149 is the Proton donor/acceptor of the active site. Position 150 (arginine 150) interacts with substrate. 275–276 is a binding site for substrate; it reads EE. Arginine 291 serves as a coordination point for substrate. Position 292 (aspartate 292) interacts with Ca(2+). Asparagine 293 carries N-linked (GlcNAc...) asparagine; by host glycosylation. The Ca(2+) site is built by glycine 296 and aspartate 322. Arginine 368 lines the substrate pocket. An N-linked (GlcNAc...) asparagine; by host glycan is attached at asparagine 398. The active-site Nucleophile is tyrosine 402.

This sequence belongs to the glycosyl hydrolase 34 family. Homotetramer. Requires Ca(2+) as cofactor. Post-translationally, N-glycosylated.

The protein resides in the virion membrane. It is found in the host apical cell membrane. It carries out the reaction Hydrolysis of alpha-(2-&gt;3)-, alpha-(2-&gt;6)-, alpha-(2-&gt;8)- glycosidic linkages of terminal sialic acid residues in oligosaccharides, glycoproteins, glycolipids, colominic acid and synthetic substrates.. Its activity is regulated as follows. Inhibited by the neuraminidase inhibitors zanamivir (Relenza) and oseltamivir (Tamiflu). These drugs interfere with the release of progeny virus from infected cells and are effective against all influenza strains. Resistance to neuraminidase inhibitors is quite rare. Catalyzes the removal of terminal sialic acid residues from viral and cellular glycoconjugates. Cleaves off the terminal sialic acids on the glycosylated HA during virus budding to facilitate virus release. Additionally helps virus spread through the circulation by further removing sialic acids from the cell surface. These cleavages prevent self-aggregation and ensure the efficient spread of the progeny virus from cell to cell. Otherwise, infection would be limited to one round of replication. Described as a receptor-destroying enzyme because it cleaves a terminal sialic acid from the cellular receptors. May facilitate viral invasion of the upper airways by cleaving the sialic acid moieties on the mucin of the airway epithelial cells. Likely to plays a role in the budding process through its association with lipid rafts during intracellular transport. May additionally display a raft-association independent effect on budding. Plays a role in the determination of host range restriction on replication and virulence. Sialidase activity in late endosome/lysosome traffic seems to enhance virus replication. This chain is Neuraminidase, found in Aves (Horse).